Reading from the N-terminus, the 207-residue chain is SPRY domain-containing protein 4 (207 aa).

The region spanning 12–206 (CRWGAKRLGV…THSGLEVPEG (195 aa)) is the B30.2/SPRY domain. An N6-acetyllysine mark is found at Lys-53 and Lys-130. The residue at position 139 (Lys-139) is an N6-succinyllysine.

This chain is SPRY domain-containing protein 4 (SPRYD4), found in Homo sapiens (Human).